Here is a 196-residue protein sequence, read N- to C-terminus: Ankyrin repeat domain-containing protein 66 (196 aa).

ANK repeat units follow at residues serine 7 to tyrosine 37, asparagine 43 to leucine 72, and valine 76 to alanine 105. A disordered region spans residues glutamate 152–valine 196. A compositionally biased stretch (polar residues) spans arginine 187–valine 196.

The chain is Ankyrin repeat domain-containing protein 66 (ANKRD66) from Homo sapiens (Human).